Reading from the N-terminus, the 887-residue chain is Alpha-amylase 3, chloroplastic (887 aa).

The N-terminal 55 residues, 1-55, are a transit peptide targeting the chloroplast; sequence MSTVPIESLLHHSYLRHNSKVNRGNRSFIPISLNLRSHFTSNKLLHSIGKSVGVS. A disulfide bridge connects residues cysteine 499 and cysteine 587. Substrate-binding positions include 545-546 and 664-669; these read YM and RLDFVR. Aspartate 666 functions as the Nucleophile in the catalytic mechanism. Glutamate 691 acts as the Proton donor in catalysis. Substrate is bound by residues tryptophan 693, serine 695, glutamine 712, lysine 754, 760-762, histidine 773, glutamine 779, lysine 857, and tryptophan 884; that span reads GWW.

Belongs to the glycosyl hydrolase 13 family. Ca(2+) is required as a cofactor. In terms of tissue distribution, expressed in developing siliques.

Its subcellular location is the plastid. It is found in the chloroplast. The enzyme catalyses Endohydrolysis of (1-&gt;4)-alpha-D-glucosidic linkages in polysaccharides containing three or more (1-&gt;4)-alpha-linked D-glucose units.. With respect to regulation, redox-regulated, with the highest activity under reducing conditions. The midpoint redox potential is -329 mV. The disulfide bridge between Cys-499 and Cys-587 inhibits catalysis. Inhibited by CuCl(2) and H(2)O(2). Possesses endoamylolytic activity in vitro, but seems not required for breakdown of transitory starch in leaves. May be involved in the determination of the final structure of glucans by shortening long linear phospho-oligosaccharides in the chloroplast stroma. Can act on both soluble and insoluble glucan substrates to release small linear and branched malto-oligosaccharides. Works synergistically with beta-amylase toward efficient starch degradation. Has activity against p-nitrophenyl maltoheptaoside (BPNP-G7), amylopectin and beta-limit dextrin. Involved in stress-induced starch degradation. In Arabidopsis thaliana (Mouse-ear cress), this protein is Alpha-amylase 3, chloroplastic.